The following is a 374-amino-acid chain: Probable ethanolamine kinase (374 aa).

ATP-binding residues include Arg93 and Asp252.

This sequence belongs to the choline/ethanolamine kinase family.

It carries out the reaction ethanolamine + ATP = phosphoethanolamine + ADP + H(+). The protein operates within phospholipid metabolism; phosphatidylethanolamine biosynthesis; phosphatidylethanolamine from ethanolamine: step 1/3. Functionally, involved in phospholipid biosynthesis. Catalyzes the first step in phosphatidylethanolamine biosynthesis. This chain is Probable ethanolamine kinase (EMB1187), found in Arabidopsis thaliana (Mouse-ear cress).